Here is a 41-residue protein sequence, read N- to C-terminus: Plantazolicin (41 aa).

Positions 1 to 27 are excised as a propeptide; sequence MTKITIPTALSAKVHGEGQHLFEPMAA. R28 is subject to N2,N2-dimethylarginine; in form plantazolicin A. The thiazole-4-carboxylic acid (Arg-Cys) cross-link spans 28 to 29; sequence RC. Cross-links (5-methyloxazole-4-carboxylic acid (Cys-Thr)) lie at residues 29–30 and 31–32; these read CT. The segment at residues 30 to 31 is a cross-link (thiazole-4-carboxylic acid (Thr-Cys)); sequence TC. A cross-link (5-methyloxazole-4-carboxylic acid (Thr-Thr)) is located at residues 32–33; the sequence is TT. The segment at residues 35 to 36 is a cross-link (oxazole-4-carboxylic acid (Ile-Ser)); it reads IS. 3 consecutive cross-links (oxazole-4-carboxylic acid (Ser-Ser)) follow at residues 36 to 37, 37 to 38, and 38 to 39; these read SS. The segment at residues 39-40 is a cross-link (5-methyloxazoline-4-carboxylic acid (Ser-Thr)); it reads ST.

Post-translationally, maturation of thiazole and oxazole containing antibiotics involves the enzymatic condensation of a Cys, Ser or Thr with the alpha-carbonyl of the preceding amino acid to form a thioether or ether bond, then dehydration to form a double bond with the alpha-amino nitrogen. Thiazoline or oxazoline ring are dehydrogenated to form thiazole or oxazole rings.

It localises to the secreted. The protein resides in the cell wall. Functionally, peptide antibiotic inhibiting growth of Gram-positive bacteria. The mode of action appears to be disruption of cell walls and lysis of cells. The protein is Plantazolicin of Bacillus pumilus (strain ATCC 7061 / DSM 27 / CCUG 26015 / JCM 2508 / NBRC 12092 / NCIMB 9369 / NCTC 10337 / NRRL NRS-272 / CCM 2144).